The primary structure comprises 126 residues: Class I hydrophobin 1 (126 aa).

Residues 1–16 (MQYMTIVAFLAATVAA) form the signal peptide. Intrachain disulfides connect C38–C100, C46–C94, C47–C75, and C101–C119.

This sequence belongs to the fungal hydrophobin family.

The protein resides in the secreted. The protein localises to the cell wall. Functionally, aerial growth, conidiation, and dispersal of filamentous fungi in the environment rely upon a capability of their secreting small amphipathic proteins called hydrophobins (HPBs) with low sequence identity. Class I can self-assemble into an outermost layer of rodlet bundles on aerial cell surfaces, conferring cellular hydrophobicity that supports fungal growth, development and dispersal; whereas Class II form highly ordered films at water-air interfaces through intermolecular interactions but contribute nothing to the rodlet structure. HYD1 and HYD2 are required for the structural integrity of the long aerial chains of microconidia. Does not seem to be important for the ability to cause seedling disease. This Gibberella moniliformis (Maize ear and stalk rot fungus) protein is Class I hydrophobin 1.